The sequence spans 207 residues: Small ribosomal subunit protein uS4c (207 aa).

Positions 92 to 150 (MRLDNILFRLGFVPTIPSARQLINHRHILVNNRIVDVPSFHCKPKDIITIGSPKTYQSI) constitute an S4 RNA-binding domain.

Belongs to the universal ribosomal protein uS4 family. In terms of assembly, part of the 30S ribosomal subunit. Contacts protein S5. The interaction surface between S4 and S5 is involved in control of translational fidelity.

The protein resides in the plastid. It localises to the chloroplast. In terms of biological role, one of the primary rRNA binding proteins, it binds directly to 16S rRNA where it nucleates assembly of the body of the 30S subunit. Functionally, with S5 and S12 plays an important role in translational accuracy. The protein is Small ribosomal subunit protein uS4c (rps4) of Equisetum variegatum (Variegated horsetail).